A 697-amino-acid chain; its full sequence is Elongation factor G 2 (697 aa).

The region spanning 5 to 280 is the tr-type G domain; it reads SKYRNIGIFA…AVVDYLPDPV (276 aa). GTP contacts are provided by residues 14-21, 78-82, and 132-135; these read AHVDAGKT, DTPGH, and NKLD.

It belongs to the TRAFAC class translation factor GTPase superfamily. Classic translation factor GTPase family. EF-G/EF-2 subfamily.

The protein resides in the cytoplasm. Its function is as follows. Catalyzes the GTP-dependent ribosomal translocation step during translation elongation. During this step, the ribosome changes from the pre-translocational (PRE) to the post-translocational (POST) state as the newly formed A-site-bound peptidyl-tRNA and P-site-bound deacylated tRNA move to the P and E sites, respectively. Catalyzes the coordinated movement of the two tRNA molecules, the mRNA and conformational changes in the ribosome. The protein is Elongation factor G 2 of Shewanella frigidimarina (strain NCIMB 400).